A 1027-amino-acid chain; its full sequence is D-2-hydroxyglutarate dehydrogenase (1027 aa).

The FAD-binding PCMH-type domain maps to 48–284 (YQQLPQAILF…CEAKLNLLLI (237 aa)). Arg405 and His503 together coordinate (R)-2-hydroxyglutarate. The 4Fe-4S ferredoxin-type domain maps to 665–696 (HEVKAAMDTCLACKACASQCPIKIDVPSFRAK). [4Fe-4S] cluster-binding residues include Cys674, Cys677, Cys680, and Cys684.

This sequence in the N-terminal section; belongs to the FAD-binding oxidoreductase/transferase type 4 family. As to quaternary structure, homotetramer. Requires [4Fe-4S] cluster as cofactor. FAD is required as a cofactor.

The enzyme catalyses (R)-2-hydroxyglutarate + A = 2-oxoglutarate + AH2. Functionally, catalyzes the oxidation of D-2-hydroxyglutarate (D-2-HGA) to 2-oxoglutarate. Provides the way to recycle D-2-HGA produced during L-serine synthesis by SerA, by converting it back to 2-oxoglutarate. The physiological molecule that functions as the primary electron acceptor during D-2-HGA oxidation is unknown. This Haemophilus influenzae (strain ATCC 51907 / DSM 11121 / KW20 / Rd) protein is D-2-hydroxyglutarate dehydrogenase.